A 1463-amino-acid polypeptide reads, in one-letter code: Nucleoporin NUP152 (1463 aa).

Disordered regions lie at residues 1–199 (MDPP…GRPG), 339–568 (GIPD…ELPA), and 609–1064 (TTKK…FGNT). Polar residues-rich tracts occupy residues 32–42 (STNSNSVTANA), 81–92 (GPSSKLSQSVSA), 144–155 (TSSKATSFSGAP), 175–191 (TTYTQRVSSHPLTQSFP), 367–378 (PSSSTFTHTASP), and 416–472 (PAKT…SSNI). Acidic residues predominate over residues 481–498 (KDEDNESDTGSEAEAEDE). 2 stretches are compositionally biased toward low complexity: residues 511–523 (GASSSAPSEGGES) and 616–630 (AAAPAEAPKEATPTT). Composition is skewed to polar residues over residues 651–664 (IFGSTTNPTETSIP), 673–689 (PATSTTNSLFGATTSAA), and 720–746 (TTESPKTNLFQFGTPNKTETAPATQPQ). One copy of the FXFG 1 repeat lies at 729-732 (FQFG). Residues 753 to 768 (KPPSTETPTEKPATTS) are compositionally biased toward low complexity. The span at 777–789 (PATTSSLFGSATT) shows a compositional bias: polar residues. Residues 803–813 (TTTPADKPTTT) are compositionally biased toward low complexity. A compositionally biased stretch (polar residues) spans 814 to 828 (NLFGSTSTQATSGSD). The FXFG 2 repeat unit spans residues 835–838 (FAFG). Residues 840–863 (TTESKPTTSLFGSTTPAPATSTEN) are compositionally biased toward polar residues. Low complexity predominate over residues 870–881 (ATTTSATPATNT). 5 stretches are compositionally biased toward polar residues: residues 900 to 923 (GSSTTTAAPVFQFGSTPASTSTEQ), 940 to 961 (GSTSATSTEQKPLFGSSTTMTE), 968 to 987 (SISTTATEQKPLFGSTSTTE), 998 to 1029 (STEQKSLFGITPSTTENNPASIFGNSSTSTEQ), and 1037 to 1055 (PASTEQKPLFGSTPSTTEN). The stretch at 910-913 (FQFG) is one FXFG 3 repeat. FXFG repeat units lie at residues 1074 to 1077 (FNFG), 1127 to 1130 (FNFG), 1141 to 1144 (FTFG), and 1152 to 1155 (FTFG). Disordered stretches follow at residues 1155–1174 (GASSDSSNASNNASSAPIFS) and 1179–1217 (QPSSTPLFGQNNPPAASNIFASSLAPVGGTSTGTSKHVP). A compositionally biased stretch (low complexity) spans 1156-1170 (ASSDSSNASNNASSA). Residues 1173 to 1176 (FSFG) form an FXFG 8 repeat. Residues 1179–1199 (QPSSTPLFGQNNPPAASNIFA) show a composition bias toward polar residues. One copy of the FXFG 9 repeat lies at 1236–1239 (FTFG). The span at 1240-1271 (GASSLATTPAASTPEPSAANAAAAGEDQGASA) shows a compositional bias: low complexity. 2 disordered regions span residues 1240-1335 (GASS…PWKV) and 1416-1463 (AALE…DEKK). The RanBD1 domain maps to 1289–1427 (GEEDESVVHE…LEEHKKANEK (139 aa)). Residues 1418–1463 (LEEHKKANEKKDGEKNEESEKKDEKQEEKKNEEKKDEKEEKKDEKK) are compositionally biased toward basic and acidic residues.

In terms of assembly, the nuclear pore complex (NPC) constitutes the exclusive means of nucleocytoplasmic transport. NPCs allow the passive diffusion of ions and small molecules and the active, nuclear transport receptor-mediated bidirectional transport of macromolecules such as proteins, RNAs, ribonucleoparticles (RNPs), and ribosomal subunits across the nuclear envelope. The 55-60 MDa NPC is composed of at least 28 different subunits: AMO1, ELYS, GLE1, GLE2, MLP1, NDC1, NIC96, NSP1, NUP133, NUP145, NUP152, NUP159, NUP170, NUP188, NUP192, NUP37, NUP49, NUP53, NUP56, NUP57, NUP82, NUP84, NUP85, POM152, POM33, POM34, SEC13 and SEH1. Due to its 8-fold rotational symmetry, all subunits are present with 8 copies or multiples thereof.

It localises to the nucleus. Its subcellular location is the nuclear pore complex. It is found in the nucleus membrane. In terms of biological role, functions as a component of the nuclear pore complex (NPC). NPC components, collectively referred to as nucleoporins (NUPs), can play the role of both NPC structural components and of docking or interaction partners for transiently associated nuclear transport factors. Active directional transport is assured by both, a Phe-Gly (FG) repeat affinity gradient for these transport factors across the NPC and a transport cofactor concentration gradient across the nuclear envelope (GSP1 and GSP2 GTPases associated predominantly with GTP in the nucleus, with GDP in the cytoplasm). The chain is Nucleoporin NUP152 (NUP152) from Chaetomium thermophilum (strain DSM 1495 / CBS 144.50 / IMI 039719) (Thermochaetoides thermophila).